Reading from the N-terminus, the 89-residue chain is Small ribosomal subunit protein uS14A (89 aa).

The protein belongs to the universal ribosomal protein uS14 family. Part of the 30S ribosomal subunit. Contacts proteins S3 and S10.

Binds 16S rRNA, required for the assembly of 30S particles and may also be responsible for determining the conformation of the 16S rRNA at the A site. The polypeptide is Small ribosomal subunit protein uS14A (Bacillus pumilus (strain SAFR-032)).